Reading from the N-terminus, the 535-residue chain is UDP-glucuronosyltransferase 1A1 (535 aa).

The N-terminal stretch at 1 to 29 (MSVVCRSSCSLLLLPCLLLCVLGPSASHA) is a signal peptide. N-linked (GlcNAc...) asparagine glycans are attached at residues asparagine 89, asparagine 297, and asparagine 435. Residues 493–509 (VIGFLLAIVLTVVFIVY) form a helical membrane-spanning segment.

It belongs to the UDP-glycosyltransferase family. As to quaternary structure, homodimers. Homooligomer. Interacts with UGT1A3, UGT1A4, UGT1A6, UGT1A7, UGT1A8, UGT1A9 and UGT1A10 to form heterodimers.

It is found in the endoplasmic reticulum membrane. The catalysed reaction is glucuronate acceptor + UDP-alpha-D-glucuronate = acceptor beta-D-glucuronoside + UDP + H(+). It catalyses the reaction 17beta-estradiol + UDP-alpha-D-glucuronate = 17beta-estradiol 3-O-(beta-D-glucuronate) + UDP + H(+). The enzyme catalyses 2-hydroxyestrone + UDP-alpha-D-glucuronate = 2-hydroxyestrone 3-O-(beta-D-glucuronate) + UDP + H(+). It carries out the reaction 2-hydroxy-17beta-estradiol + UDP-alpha-D-glucuronate = 2-hydroxy-17beta-estradiol 3-O-(beta-D-glucuronate) + UDP + H(+). The catalysed reaction is 2-methoxy-17beta-estradiol + UDP-alpha-D-glucuronate = 2-methoxy-17beta-estradiol 3-O-(beta-D-glucuronate) + UDP + H(+). It catalyses the reaction 17alpha-estradiol + UDP-alpha-D-glucuronate = 17alpha-estradiol 3-O-(beta-D-glucuronate) + UDP + H(+). The enzyme catalyses 16beta,17beta-estriol + UDP-alpha-D-glucuronate = 16beta,17beta-estriol 16-O-(beta-D-glucuronate) + UDP + H(+). It carries out the reaction losartan + UDP-alpha-D-glucuronate = losartan-2-N-beta-D-glucuronide + UDP. The catalysed reaction is prunetin + UDP-alpha-D-glucuronate = prunetin-4'-O-beta-D-glucuronide + UDP. It catalyses the reaction SN-38 + UDP-alpha-D-glucuronate = SN-38 O-beta-D-glucuronide + UDP + H(+). The enzyme catalyses (4Z,15Z)-bilirubin IXalpha + UDP-alpha-D-glucuronate = (4Z,15Z)-bilirubin IXalpha C12-beta-D-glucuronoside + UDP. It carries out the reaction (4Z,15Z)-bilirubin IXalpha + UDP-alpha-D-glucuronate = (4Z,15Z)-bilirubin IXalpha C8-beta-D-glucuronoside + UDP. The catalysed reaction is (4Z,15Z)-bilirubin IXalpha C8-beta-D-glucuronoside + UDP-alpha-D-glucuronate = (4Z,15Z)-bilirubin IXalpha C8,C12-beta-D-bisglucuronoside + UDP. It catalyses the reaction (4Z,15Z)-bilirubin IXalpha C12-beta-D-glucuronoside + UDP-alpha-D-glucuronate = (4Z,15Z)-bilirubin IXalpha C8,C12-beta-D-bisglucuronoside + UDP. The enzyme catalyses 8-iso-prostaglandin F2alpha + UDP-alpha-D-glucuronate = 8-iso-prostaglandin F2alpha-glucuronide + UDP + H(+). It carries out the reaction (5Z,8Z,11Z,14Z)-eicosatetraenoate + UDP-alpha-D-glucuronate = O-[(5Z),(8Z),(11Z),(14Z)-eicosatetraenoyl]-beta-D-glucuronate + UDP. The catalysed reaction is 15-hydroxy-(5Z,8Z,11Z,13E)-eicosatetraenoate + UDP-alpha-D-glucuronate = 15-O-(beta-D-glucuronosyl)-(5Z,8Z,11Z,14Z)-eicosatetraenoate + UDP + H(+). It catalyses the reaction 20-hydroxy-(5Z,8Z,11Z,14Z)-eicosatetraenoate + UDP-alpha-D-glucuronate = 20-O-(beta-D-glucuronosyl)-(5Z,8Z,11Z,14Z)-eicosatetraenoate + UDP + H(+). The enzyme catalyses prostaglandin B1 + UDP-alpha-D-glucuronate = 15-O-(beta-D-glucuronosyl)-prostaglandin B1 + UDP + H(+). It carries out the reaction (E)-ferulate + UDP-alpha-D-glucuronate = (E)-4-O-(beta-D-glucuronosyl)-ferulate + UDP + H(+). The catalysed reaction is (E)-ferulate + UDP-alpha-D-glucuronate = (E)-ferulic acid beta-D-glucuronate ester + UDP. Its function is as follows. UDP-glucuronosyltransferase (UGT) that catalyzes phase II biotransformation reactions in which lipophilic substrates are conjugated with glucuronic acid to increase the metabolite's water solubility, thereby facilitating excretion into either the urine or bile. Essential for the elimination and detoxification of drugs, xenobiotics and endogenous compounds. Catalyzes the glucuronidation of endogenous estrogen hormones such as estradiol, estrone and estriol. Involved in the glucuronidation of bilirubin, a degradation product occurring in the normal catabolic pathway that breaks down heme in vertebrates. Involved in the glucuronidation of arachidonic acid (AA) and AA-derived eicosanoids including 15-HETE, 20-HETE, PGB1 and F2-isoprostane (8-iso-PGF2alpha). Involved in the glucuronidation of the phytochemical ferulic acid at the phenolic or the carboxylic acid group. Also catalyzes the glucuronidation the isoflavones genistein, daidzein, glycitein, formononetin, biochanin A and prunetin, which are phytoestrogens with anticancer and cardiovascular properties. Involved in the glucuronidation of the AGTR1 angiotensin receptor antagonist losartan, a drug which can inhibit the effect of angiotensin II. Involved in the biotransformation of 7-ethyl-10-hydroxycamptothecin (SN-38), the pharmacologically active metabolite of the anticancer drug irinotecan. This chain is UDP-glucuronosyltransferase 1A1, found in Rattus norvegicus (Rat).